We begin with the raw amino-acid sequence, 417 residues long: Serine hydroxymethyltransferase 4 (417 aa).

Residues L121 and 125 to 127 (GHL) contribute to the (6S)-5,6,7,8-tetrahydrofolate site. Position 230 is an N6-(pyridoxal phosphate)lysine (K230). 355-357 (SPF) serves as a coordination point for (6S)-5,6,7,8-tetrahydrofolate.

This sequence belongs to the SHMT family. As to quaternary structure, homodimer. Pyridoxal 5'-phosphate is required as a cofactor.

It localises to the cytoplasm. The catalysed reaction is (6R)-5,10-methylene-5,6,7,8-tetrahydrofolate + glycine + H2O = (6S)-5,6,7,8-tetrahydrofolate + L-serine. The protein operates within one-carbon metabolism; tetrahydrofolate interconversion. Its pathway is amino-acid biosynthesis; glycine biosynthesis; glycine from L-serine: step 1/1. Its function is as follows. Catalyzes the reversible interconversion of serine and glycine with tetrahydrofolate (THF) serving as the one-carbon carrier. This reaction serves as the major source of one-carbon groups required for the biosynthesis of purines, thymidylate, methionine, and other important biomolecules. Also exhibits THF-independent aldolase activity toward beta-hydroxyamino acids, producing glycine and aldehydes, via a retro-aldol mechanism. This chain is Serine hydroxymethyltransferase 4, found in Colwellia psychrerythraea (strain 34H / ATCC BAA-681) (Vibrio psychroerythus).